A 101-amino-acid chain; its full sequence is Protein translation factor SUI1 homolog (101 aa).

It belongs to the SUI1 family.

The chain is Protein translation factor SUI1 homolog from Methanoregula boonei (strain DSM 21154 / JCM 14090 / 6A8).